The sequence spans 510 residues: NAD(P)H-quinone oxidoreductase subunit 2 A, chloroplastic (510 aa).

Helical transmembrane passes span 24 to 44 (LLLF…GLIL), 59 to 79 (WFYF…LFRW), 99 to 119 (IFQF…VEYI), 124 to 144 (MAIT…MFLC), 149 to 169 (LITI…LSGY), 183 to 203 (YLLM…WLYG), 229 to 249 (ISLA…PAPF), 295 to 315 (WHLL…LLAI), 323 to 343 (MLAY…IVGD), 354 to 374 (YMLF…LFGL), 395 to 415 (ALSL…AGFF), and 418 to 438 (LYLF…IGLL).

This sequence belongs to the complex I subunit 2 family. As to quaternary structure, NDH is composed of at least 16 different subunits, 5 of which are encoded in the nucleus.

The protein localises to the plastid. It is found in the chloroplast thylakoid membrane. The catalysed reaction is a plastoquinone + NADH + (n+1) H(+)(in) = a plastoquinol + NAD(+) + n H(+)(out). It carries out the reaction a plastoquinone + NADPH + (n+1) H(+)(in) = a plastoquinol + NADP(+) + n H(+)(out). Functionally, NDH shuttles electrons from NAD(P)H:plastoquinone, via FMN and iron-sulfur (Fe-S) centers, to quinones in the photosynthetic chain and possibly in a chloroplast respiratory chain. The immediate electron acceptor for the enzyme in this species is believed to be plastoquinone. Couples the redox reaction to proton translocation, and thus conserves the redox energy in a proton gradient. This is NAD(P)H-quinone oxidoreductase subunit 2 A, chloroplastic from Triticum aestivum (Wheat).